A 78-amino-acid polypeptide reads, in one-letter code: UPF0270 protein YPTB3725 (78 aa).

Belongs to the UPF0270 family.

The chain is UPF0270 protein YPTB3725 from Yersinia pseudotuberculosis serotype I (strain IP32953).